The primary structure comprises 213 residues: Thiamine-phosphate synthase (213 aa).

4-amino-2-methyl-5-(diphosphooxymethyl)pyrimidine contacts are provided by residues 38–42 and asparagine 73; that span reads QLREK. Mg(2+) contacts are provided by aspartate 74 and aspartate 93. Serine 111 contributes to the 4-amino-2-methyl-5-(diphosphooxymethyl)pyrimidine binding site. 137 to 139 lines the 2-[(2R,5Z)-2-carboxy-4-methylthiazol-5(2H)-ylidene]ethyl phosphate pocket; it reads TTS. Lysine 140 is a 4-amino-2-methyl-5-(diphosphooxymethyl)pyrimidine binding site. 2-[(2R,5Z)-2-carboxy-4-methylthiazol-5(2H)-ylidene]ethyl phosphate contacts are provided by residues glycine 169 and 189–190; that span reads IS.

Belongs to the thiamine-phosphate synthase family. Mg(2+) serves as cofactor.

The catalysed reaction is 2-[(2R,5Z)-2-carboxy-4-methylthiazol-5(2H)-ylidene]ethyl phosphate + 4-amino-2-methyl-5-(diphosphooxymethyl)pyrimidine + 2 H(+) = thiamine phosphate + CO2 + diphosphate. It catalyses the reaction 2-(2-carboxy-4-methylthiazol-5-yl)ethyl phosphate + 4-amino-2-methyl-5-(diphosphooxymethyl)pyrimidine + 2 H(+) = thiamine phosphate + CO2 + diphosphate. It carries out the reaction 4-methyl-5-(2-phosphooxyethyl)-thiazole + 4-amino-2-methyl-5-(diphosphooxymethyl)pyrimidine + H(+) = thiamine phosphate + diphosphate. It participates in cofactor biosynthesis; thiamine diphosphate biosynthesis; thiamine phosphate from 4-amino-2-methyl-5-diphosphomethylpyrimidine and 4-methyl-5-(2-phosphoethyl)-thiazole: step 1/1. Condenses 4-methyl-5-(beta-hydroxyethyl)thiazole monophosphate (THZ-P) and 2-methyl-4-amino-5-hydroxymethyl pyrimidine pyrophosphate (HMP-PP) to form thiamine monophosphate (TMP). The chain is Thiamine-phosphate synthase from Lysinibacillus sphaericus (strain C3-41).